The primary structure comprises 183 residues: Bifunctional protein PyrR (183 aa).

The PRPP-binding motif lies at 102 to 114 (VVLVDDVLYTGRT).

It belongs to the purine/pyrimidine phosphoribosyltransferase family. PyrR subfamily. Homodimer and homohexamer; in equilibrium.

It catalyses the reaction UMP + diphosphate = 5-phospho-alpha-D-ribose 1-diphosphate + uracil. Its function is as follows. Regulates transcriptional attenuation of the pyrimidine nucleotide (pyr) operon by binding in a uridine-dependent manner to specific sites on pyr mRNA. This disrupts an antiterminator hairpin in the RNA and favors formation of a downstream transcription terminator, leading to a reduced expression of downstream genes. In terms of biological role, also displays a weak uracil phosphoribosyltransferase activity which is not physiologically significant. This is Bifunctional protein PyrR from Listeria monocytogenes serotype 4a (strain HCC23).